Consider the following 234-residue polypeptide: Sugar fermentation stimulation protein homolog (234 aa).

It belongs to the SfsA family.

In Bartonella quintana (strain Toulouse) (Rochalimaea quintana), this protein is Sugar fermentation stimulation protein homolog.